A 24-amino-acid chain; its full sequence is Ascaphin-3 (24 aa).

Expressed by the skin glands.

Its subcellular location is the secreted. Antimicrobial peptide that shows higher potency against Gram-negative bacteria than against Gram-positive bacteria. Has a very week hemolytic activity. The protein is Ascaphin-3 of Ascaphus truei (Coastal tailed frog).